Consider the following 874-residue polypeptide: Alanine--tRNA ligase (874 aa).

His-562, His-566, Cys-665, and His-669 together coordinate Zn(2+).

It belongs to the class-II aminoacyl-tRNA synthetase family. It depends on Zn(2+) as a cofactor.

Its subcellular location is the cytoplasm. The catalysed reaction is tRNA(Ala) + L-alanine + ATP = L-alanyl-tRNA(Ala) + AMP + diphosphate. Catalyzes the attachment of alanine to tRNA(Ala) in a two-step reaction: alanine is first activated by ATP to form Ala-AMP and then transferred to the acceptor end of tRNA(Ala). Also edits incorrectly charged Ser-tRNA(Ala) and Gly-tRNA(Ala) via its editing domain. The polypeptide is Alanine--tRNA ligase (Pseudomonas paraeruginosa (strain DSM 24068 / PA7) (Pseudomonas aeruginosa (strain PA7))).